Here is a 129-residue protein sequence, read N- to C-terminus: Ribosome-binding factor A (129 aa).

This sequence belongs to the RbfA family. In terms of assembly, monomer. Binds 30S ribosomal subunits, but not 50S ribosomal subunits or 70S ribosomes.

It localises to the cytoplasm. Functionally, one of several proteins that assist in the late maturation steps of the functional core of the 30S ribosomal subunit. Associates with free 30S ribosomal subunits (but not with 30S subunits that are part of 70S ribosomes or polysomes). Required for efficient processing of 16S rRNA. May interact with the 5'-terminal helix region of 16S rRNA. In Stutzerimonas stutzeri (strain A1501) (Pseudomonas stutzeri), this protein is Ribosome-binding factor A.